A 228-amino-acid chain; its full sequence is UPF0502 protein AZOSEA09860 (228 aa).

This sequence belongs to the UPF0502 family.

The polypeptide is UPF0502 protein AZOSEA09860 (Aromatoleum aromaticum (strain DSM 19018 / LMG 30748 / EbN1) (Azoarcus sp. (strain EbN1))).